A 282-amino-acid polypeptide reads, in one-letter code: 2-dehydro-3-deoxyphosphooctonate aldolase (282 aa).

This sequence belongs to the KdsA family.

It localises to the cytoplasm. The catalysed reaction is D-arabinose 5-phosphate + phosphoenolpyruvate + H2O = 3-deoxy-alpha-D-manno-2-octulosonate-8-phosphate + phosphate. Its pathway is carbohydrate biosynthesis; 3-deoxy-D-manno-octulosonate biosynthesis; 3-deoxy-D-manno-octulosonate from D-ribulose 5-phosphate: step 2/3. It participates in bacterial outer membrane biogenesis; lipopolysaccharide biosynthesis. The protein is 2-dehydro-3-deoxyphosphooctonate aldolase of Shewanella oneidensis (strain ATCC 700550 / JCM 31522 / CIP 106686 / LMG 19005 / NCIMB 14063 / MR-1).